Here is a 248-residue protein sequence, read N- to C-terminus: Acetylglutamate kinase (248 aa).

Substrate-binding positions include 36–37, Arg58, and Asn147; that span reads GG.

Belongs to the acetylglutamate kinase family. ArgB subfamily.

It localises to the cytoplasm. It catalyses the reaction N-acetyl-L-glutamate + ATP = N-acetyl-L-glutamyl 5-phosphate + ADP. It functions in the pathway amino-acid biosynthesis; L-arginine biosynthesis; N(2)-acetyl-L-ornithine from L-glutamate: step 2/4. Catalyzes the ATP-dependent phosphorylation of N-acetyl-L-glutamate. This Thermus thermophilus (strain ATCC BAA-163 / DSM 7039 / HB27) protein is Acetylglutamate kinase.